The sequence spans 311 residues: Pyrimidine-specific ribonucleoside hydrolase RihA (311 aa).

The active site involves His240.

Belongs to the IUNH family. RihA subfamily.

Hydrolyzes cytidine or uridine to ribose and cytosine or uracil, respectively. This is Pyrimidine-specific ribonucleoside hydrolase RihA from Salmonella dublin (strain CT_02021853).